Consider the following 152-residue polypeptide: Transcriptional regulator MraZ (152 aa).

SpoVT-AbrB domains lie at 5–52 (ATLV…TLPE) and 81–124 (ASEC…DEQV).

The protein belongs to the MraZ family. Forms oligomers.

Its subcellular location is the cytoplasm. The protein resides in the nucleoid. Its function is as follows. Negatively regulates its own expression and that of the subsequent genes in the proximal part of the division and cell wall (dcw) gene cluster. Acts by binding directly to DNA. May also regulate the expression of genes outside the dcw cluster. This Proteus mirabilis (strain HI4320) protein is Transcriptional regulator MraZ.